Here is a 344-residue protein sequence, read N- to C-terminus: N,N-dimethyltransferase OxyT (344 aa).

S-adenosyl-L-methionine-binding positions include Asp-205 and 231–233 (GDF).

Belongs to the class I-like SAM-binding methyltransferase superfamily. Cation-independent O-methyltransferase family.

It carries out the reaction 4-amino-4-dedimethylamino-anhydrotetracycline + S-adenosyl-L-methionine = 4-methylamino-4-dedimethylamino-anhydrotetracycline + S-adenosyl-L-homocysteine + H(+). The catalysed reaction is 4-methylamino-4-dedimethylamino-anhydrotetracycline + S-adenosyl-L-methionine = anhydrotetracycline + S-adenosyl-L-homocysteine + H(+). The protein operates within antibiotic biosynthesis; oxytetracycline biosynthesis. Involved in the biosynthesis of the tetracycline antibiotic, oxytetracycline. Catalyzes the dimethylation of 4-amino-4-de(dimethylamino)anhydrotetracycline (4-amino-ATC) to yield anhydrotetracycline (ATC). Also able to catalyze the dimethylation of 7-chloro-, 6-demethyl-, 2-decarboxamido-2-nitrile-, and 4-methylamino-derivatives of 4-amino-4-de(dimethylamino)anhydrotetracycline. The chain is N,N-dimethyltransferase OxyT from Streptomyces rimosus.